We begin with the raw amino-acid sequence, 251 residues long: Ubiquinone/menaquinone biosynthesis C-methyltransferase UbiE (251 aa).

S-adenosyl-L-methionine-binding positions include T74, D95, and 123–124 (NA).

It belongs to the class I-like SAM-binding methyltransferase superfamily. MenG/UbiE family.

It catalyses the reaction a 2-demethylmenaquinol + S-adenosyl-L-methionine = a menaquinol + S-adenosyl-L-homocysteine + H(+). It carries out the reaction a 2-methoxy-6-(all-trans-polyprenyl)benzene-1,4-diol + S-adenosyl-L-methionine = a 5-methoxy-2-methyl-3-(all-trans-polyprenyl)benzene-1,4-diol + S-adenosyl-L-homocysteine + H(+). It participates in quinol/quinone metabolism; menaquinone biosynthesis; menaquinol from 1,4-dihydroxy-2-naphthoate: step 2/2. The protein operates within cofactor biosynthesis; ubiquinone biosynthesis. Functionally, methyltransferase required for the conversion of demethylmenaquinol (DMKH2) to menaquinol (MKH2) and the conversion of 2-polyprenyl-6-methoxy-1,4-benzoquinol (DDMQH2) to 2-polyprenyl-3-methyl-6-methoxy-1,4-benzoquinol (DMQH2). This Pseudoalteromonas translucida (strain TAC 125) protein is Ubiquinone/menaquinone biosynthesis C-methyltransferase UbiE.